A 541-amino-acid chain; its full sequence is MSMTSLSTKSRRQEDVVIEGWLHKKGEHIRNWRPRYFMIFNDGALLGFRAKPKEGQPFPEPLNDFMIKDAATMLFEKPRPNMFMVRCLQWTTVIERTFYAESAEVRQRWIHAIESISKKYKGTNANPQEELMETNQQPKIDEDSEFAGAAHAIMGQPSSGHGDNCSIDFRASMISIADTSEAAKRDKITMEDFDFLKVLGKGTFGKVILCKEKRTQKLYAIKILKKDVIIAREEVAHTLTENRVLQRCKHPFLTELKYSFQEQHYLCFVMQFANGGELFTHVRKCGTFSEPRARFYGAEIVLALGYLHRCDIVYRDMKLENLLLDKDGHIKIADFGLCKEEISFGDKTSTFCGTPEYLAPEVLDDHDYGRCVDWWGVGVVMYEMMCGRLPFYSKDHNKLFELIMAGDLRFPSKLSQEARTLLTGLLVKDPTQRLGGGPEDALEICRADFFRTVDWEATYRKEIEPPYKPNVQSETDTSYFDNEFTSQPVQLTPPSRSGALATVDEQEEMQSNFTQFSFHNVMGSINRIHEASEDNEDYDMG.

A PH domain is found at 15–118 (DVVIEGWLHK…WIHAIESISK (104 aa)). The Protein kinase domain maps to 193–450 (FDFLKVLGKG…ALEICRADFF (258 aa)). ATP contacts are provided by residues 199–207 (LGKGTFGKV) and Lys-222. Asp-316 (proton acceptor) is an active-site residue. Residue Thr-350 is modified to Phosphothreonine. The 78-residue stretch at 451–528 (RTVDWEATYR…HNVMGSINRI (78 aa)) folds into the AGC-kinase C-terminal domain. Ser-517 bears the Phosphoserine mark.

This sequence belongs to the protein kinase superfamily. AGC Ser/Thr protein kinase family. RAC subfamily. In terms of assembly, interacts with pdk-1, sgk-1, akt-2 and daf-16. Part of a complex containing sgk-1, akt-1 and akt-2. Interacts with cmd-1 in the presence of Ca(2+). Interacts with let-92 phosphatase regulatory subunit pptr-1. Requires Mg(2+) as cofactor. In terms of tissue distribution, expressed in neurons, muscle cells of the pharynx, rectal gland cells, vulva and spermatheca.

The catalysed reaction is L-seryl-[protein] + ATP = O-phospho-L-seryl-[protein] + ADP + H(+). The enzyme catalyses L-threonyl-[protein] + ATP = O-phospho-L-threonyl-[protein] + ADP + H(+). Phosphorylated and activated by pdk-1. Its function is as follows. Acts downstream of PI3 kinase age-1 and kinase pdk-1 in the daf-2/insulin receptor-like transduction pathway. Phosphorylates Forkhead-related daf-16 and the longevity-promoting skn-1 transcription factors, which inhibits their entry into the nucleus and antagonizes their functions. Plays a role in maintaining the gonadal basement membrane through it's role in inhibiting daf-16 activity. Has an essential role in regulating developmental arrest at the dauer stage. Plays a role in immune function and pathogen resistance. Regulates salt chemotaxis learning. Downstream of age-1 and together with akt-2 and sgk-1, promotes cell survival during embryonic development. The chain is Serine/threonine-protein kinase akt-1 from Caenorhabditis elegans.